The chain runs to 624 residues: Heat shock factor protein 5 (624 aa).

The DNA-binding element occupies 11–228; the sequence is NPNNFPAKLW…FHRSFRRDNL (218 aa). Disordered regions lie at residues 52–77, 112–138, 186–214, 429–461, and 572–605; these read LSPPGPGAGGAGGAGSSGGGGGSGVG, GAAGPGPGPGAGGPAGDGPLHHFHSPH, SASASTSPLQHQDPPPQPAGPRPEQHGPV, CPSSQANRGQHILPNANSSNPSSTSQASQLEPL, and GPANKSTKDTGLSTPARYRERRSNSQGKSPDLHL. 2 stretches are compositionally biased toward gly residues: residues 58–77 and 112–127; these read GAGGAGGAGSSGGGGGSGVG and GAAGPGPGPGAGGPAG. Composition is skewed to low complexity over residues 186–197 and 442–457; these read SASASTSPLQHQ and PNANSSNPSSTSQASQ. At S600 the chain carries Phosphoserine.

It belongs to the HSF family. In terms of assembly, homooligomer. Highly expressed in testis particularly in spermatocytes (at protein level). Not expressed in fetal testis and ovary.

The protein resides in the nucleus. The protein localises to the chromosome. In terms of biological role, DNA-binding transcription factor that is essential for male fertility, spermatogenesis and meiotic prophase progression in spermatocytes under non-stress conditions. Positvely and negatively regulates gene expression to ensure progression of meiotic prophase beyond pachytene stage in spermatocytes. Plays a role in male germline meiotic sex chromosome remodeling and silencing through regulation of SMARCA4. The polypeptide is Heat shock factor protein 5 (Hsf5) (Mus musculus (Mouse)).